Consider the following 203-residue polypeptide: Glycerol-3-phosphate acyltransferase (203 aa).

A run of 6 helical transmembrane segments spans residues 5-25 (IASI…FSLL), 50-70 (TCGF…GALP), 72-92 (IAAQ…TAAM), 115-135 (VVLT…AVTF), 140-160 (ISAV…AVLL), and 162-182 (LGML…AIVF).

Belongs to the PlsY family. In terms of assembly, probably interacts with PlsX.

The protein localises to the cell membrane. The catalysed reaction is an acyl phosphate + sn-glycerol 3-phosphate = a 1-acyl-sn-glycero-3-phosphate + phosphate. The protein operates within lipid metabolism; phospholipid metabolism. In terms of biological role, catalyzes the transfer of an acyl group from acyl-phosphate (acyl-PO(4)) to glycerol-3-phosphate (G3P) to form lysophosphatidic acid (LPA). This enzyme utilizes acyl-phosphate as fatty acyl donor, but not acyl-CoA or acyl-ACP. The polypeptide is Glycerol-3-phosphate acyltransferase (Roseiflexus sp. (strain RS-1)).